The chain runs to 451 residues: Putative metabolite transport protein YyaJ (451 aa).

The Cytoplasmic portion of the chain corresponds to 1–29; sequence MNTIFKQKNTHPFSNAANRLDRLPISRVH. The chain crosses the membrane as a helical span at residues 30-50; it reads FQVLTALGIVYFFDLADLFTL. Topologically, residues 51 to 60 are extracellular; it reads SNVAPALIEH. The chain crosses the membrane as a helical span at residues 61-81; that stretch reads WGIPLSTIANVTAASFLGMFL. The Cytoplasmic segment spans residues 82–97; it reads GASLGGRLSDRIGRKK. A helical transmembrane segment spans residues 98 to 118; the sequence is ALNLFVFVFSIASLCNAAAWD. Over 119-124 the chain is Extracellular; the sequence is IPSLMT. The helical transmembrane segment at 125–145 threads the bilayer; that stretch reads FRFLTGFGVAAAMVITNSYLA. Over 146–157 the chain is Cytoplasmic; that stretch reads EFFPSSVRGKYI. The helical transmembrane segment at 158–178 threads the bilayer; it reads SFCAMIGLIGVPITNIVSAFV. Residues 179–182 are Extracellular-facing; sequence IPLG. The helical transmembrane segment at 183-203 threads the bilayer; it reads SWGWRLVFVWGAVGLIYFFFI. Residues 204-270 lie on the Cytoplasmic side of the membrane; the sequence is HRLEESPRWH…LLKGRNLKIT (67 aa). Residues 271–291 traverse the membrane as a helical segment; sequence IVLSAVWIFETFGFYGFASWV. The Extracellular segment spans residues 292 to 305; that stretch reads PSLLKSNGVTMENT. Residues 306-326 form a helical membrane-spanning segment; the sequence is LWYNVLHSVGAPLGALLGSMI. The Cytoplasmic segment spans residues 327-333; it reads SERFQRK. A helical membrane pass occupies residues 334 to 354; sequence WILAASAFLTAIAGLLYGMTF. Residues 355–357 lie on the Extracellular side of the membrane; that stretch reads IPI. The helical transmembrane segment at 358 to 378 threads the bilayer; that stretch reads MIIVFGFIVNITERVFTSNLY. Over 379 to 396 the chain is Cytoplasmic; sequence AYTSEPYPTEYRSSGSGL. Residues 397–417 form a helical membrane-spanning segment; it reads AYGLGRFSNIFGSLLVGFIAV. Topologically, residues 418 to 421 are extracellular; sequence QLGY. A helical membrane pass occupies residues 422–442; the sequence is ISVFLFIGGCWLACSLLLIFF. The Cytoplasmic portion of the chain corresponds to 443 to 451; that stretch reads GPNTNAKQI.

Belongs to the major facilitator superfamily. Sugar transporter (TC 2.A.1.1) family.

Its subcellular location is the cell membrane. The chain is Putative metabolite transport protein YyaJ (yyaJ) from Bacillus subtilis (strain 168).